Here is a 269-residue protein sequence, read N- to C-terminus: Fructose-2,6-bisphosphatase TIGAR (269 aa).

Histidine 11 acts as the Tele-phosphohistidine intermediate in catalysis. Glutamate 89 (proton donor/acceptor) is an active-site residue.

It belongs to the phosphoglycerate mutase family. As to quaternary structure, interacts with HK2; the interaction increases hexokinase HK2 activity in a hypoxia- and HIF1A-dependent manner, resulting in the regulation of mitochondrial membrane potential, thus increasing NADPH production and decreasing intracellular ROS levels. In terms of tissue distribution, expressed in olfactory bulb, cerebellum, and cortex. Expressed in neurons and astrocytes (at protein level). Expressed in intestinal crypt.

The protein localises to the cytoplasm. It is found in the nucleus. It localises to the mitochondrion. It catalyses the reaction beta-D-fructose 2,6-bisphosphate + H2O = beta-D-fructose 6-phosphate + phosphate. In terms of biological role, fructose-bisphosphatase hydrolyzing fructose-2,6-bisphosphate as well as fructose-1,6-bisphosphate. Acts as a negative regulator of glycolysis by lowering intracellular levels of fructose-2,6-bisphosphate in a p53/TP53-dependent manner, resulting in the pentose phosphate pathway (PPP) activation and NADPH production. Contributes to the generation of reduced glutathione to cause a decrease in intracellular reactive oxygen species (ROS) content, correlating with its ability to protect cells from oxidative or metabolic stress-induced cell death. Plays a role in promoting protection against cell death during hypoxia by decreasing mitochondria ROS levels in a HK2-dependent manner through a mechanism that is independent of its fructose-bisphosphatase activity. In response to cardiac damage stress, mediates p53-induced inhibition of myocyte mitophagy through ROS levels reduction and the subsequent inactivation of BNIP3. Reduced mitophagy results in an enhanced apoptotic myocyte cell death, and exacerbates cardiac damage. Plays a role in adult intestinal regeneration; contributes to the growth, proliferation and survival of intestinal crypts following tissue ablation. Plays a neuroprotective role against ischemic brain damage by enhancing PPP flux and preserving mitochondria functions. Protects glioma cells from hypoxia- and ROS-induced cell death by inhibiting glycolysis and activating mitochondrial energy metabolism and oxygen consumption in a TKTL1-dependent and p53/TP53-independent manner. Plays a role in cancer cell survival by promoting DNA repair through activating PPP flux in a CDK5-ATM-dependent signaling pathway during hypoxia and/or genome stress-induced DNA damage responses. Involved in intestinal tumor progression. This is Fructose-2,6-bisphosphatase TIGAR from Mus musculus (Mouse).